The sequence spans 141 residues: Ribosome maturation factor RimP (141 aa).

Belongs to the RimP family.

The protein resides in the cytoplasm. In terms of biological role, required for maturation of 30S ribosomal subunits. The protein is Ribosome maturation factor RimP of Laribacter hongkongensis (strain HLHK9).